We begin with the raw amino-acid sequence, 119 residues long: Autophagy-related protein 8h (119 aa).

Gly119 is lipidated: Phosphatidylethanolamine amidated glycine.

Belongs to the ATG8 family. Interacts with ATG4. Interacts with ATI1. Gly-119 forms then a thioester bond with the 'Cys-558' of ATG7 (E1-like activating enzyme) before being transferred to the 'Cys-258' of ATG3 (the specific E2 conjugating enzyme), in order to be finally amidated with phosphatidylethanolamine. This lipid modification anchors ATG8 to autophagosomes. In terms of tissue distribution, constitutively expressed.

It is found in the cytoplasmic vesicle. Its subcellular location is the autophagosome membrane. The protein resides in the vacuole membrane. The protein localises to the cytoplasm. It localises to the cytoskeleton. Functionally, ubiquitin-like modifier involved in autophagosomes formation. May mediate the delivery of the autophagosomes to the vacuole via the microtubule cytoskeleton. In Arabidopsis thaliana (Mouse-ear cress), this protein is Autophagy-related protein 8h (ATG8H).